Consider the following 206-residue polypeptide: Thymidylate kinase (206 aa).

An ATP-binding site is contributed by 16-23 (GIDGTGKS).

The protein belongs to the thymidylate kinase family.

It catalyses the reaction dTMP + ATP = dTDP + ADP. Functionally, phosphorylation of dTMP to form dTDP in both de novo and salvage pathways of dTTP synthesis. This is Thymidylate kinase from Akkermansia muciniphila (strain ATCC BAA-835 / DSM 22959 / JCM 33894 / BCRC 81048 / CCUG 64013 / CIP 107961 / Muc).